A 433-amino-acid polypeptide reads, in one-letter code: tRNA-2-methylthio-N(6)-dimethylallyladenosine synthase (433 aa).

An MTTase N-terminal domain is found at Lys3–Phe118. Cys12, Cys49, Cys81, Cys150, Cys154, and Cys157 together coordinate [4Fe-4S] cluster. Positions Arg136–Glu369 constitute a Radical SAM core domain. Residues Ala372 to Asn433 form the TRAM domain.

Belongs to the methylthiotransferase family. MiaB subfamily. In terms of assembly, monomer. [4Fe-4S] cluster serves as cofactor.

It is found in the cytoplasm. The catalysed reaction is N(6)-dimethylallyladenosine(37) in tRNA + (sulfur carrier)-SH + AH2 + 2 S-adenosyl-L-methionine = 2-methylsulfanyl-N(6)-dimethylallyladenosine(37) in tRNA + (sulfur carrier)-H + 5'-deoxyadenosine + L-methionine + A + S-adenosyl-L-homocysteine + 2 H(+). Catalyzes the methylthiolation of N6-(dimethylallyl)adenosine (i(6)A), leading to the formation of 2-methylthio-N6-(dimethylallyl)adenosine (ms(2)i(6)A) at position 37 in tRNAs that read codons beginning with uridine. In Campylobacter curvus (strain 525.92), this protein is tRNA-2-methylthio-N(6)-dimethylallyladenosine synthase.